The sequence spans 174 residues: N5-carboxyaminoimidazole ribonucleotide mutase (174 aa).

Positions 16, 19, and 46 each coordinate substrate.

The protein belongs to the AIR carboxylase family. Class I subfamily.

It catalyses the reaction 5-carboxyamino-1-(5-phospho-D-ribosyl)imidazole + H(+) = 5-amino-1-(5-phospho-D-ribosyl)imidazole-4-carboxylate. Its pathway is purine metabolism; IMP biosynthesis via de novo pathway; 5-amino-1-(5-phospho-D-ribosyl)imidazole-4-carboxylate from 5-amino-1-(5-phospho-D-ribosyl)imidazole (N5-CAIR route): step 2/2. Catalyzes the conversion of N5-carboxyaminoimidazole ribonucleotide (N5-CAIR) to 4-carboxy-5-aminoimidazole ribonucleotide (CAIR). In Mycobacterium tuberculosis (strain CDC 1551 / Oshkosh), this protein is N5-carboxyaminoimidazole ribonucleotide mutase.